The following is an 870-amino-acid chain: Serine protease DegP homolog (870 aa).

A signal peptide spans 1-29; that stretch reads MDIIFCTPTYCKIMLMIIMLISLRTRCDT. The tract at residues 128-151 is disordered; the sequence is KNPLNDNFKNPKLRKHSPNNKKNK. Residues 138 to 151 show a composition bias toward basic residues; the sequence is PKLRKHSPNNKKNK. Active-site charge relay system residues include H328, D359, and S437.

Belongs to the peptidase S1C family. As to quaternary structure, oligomer; may form trimers or hexamers. Forms a complex at least composed of DegP, ENO and HSP70.

The protein resides in the cytoplasm. The protein localises to the parasitophorous vacuole. It is found in the host cell membrane. It localises to the host cytoplasm. Serine protease which also acts as a protein chaperone. Plays a role in the parasite development in host erythrocytes possibly by protecting it against thermal and oxidative stresses. In Plasmodium falciparum (isolate 3D7), this protein is Serine protease DegP homolog.